A 614-amino-acid polypeptide reads, in one-letter code: Sorting nexin-18 (614 aa).

Positions 1 to 61 (MALRARALYD…PASYVQVIRA (61 aa)) constitute an SH3 domain. The disordered stretch occupies residues 85-218 (GFEPLPAAPP…SQELGHGEPQ (134 aa)). Residues 90–101 (PAAPPAAFPPLL) show a composition bias toward pro residues. Residues 141 to 151 (SDDDWDDEWDD) are compositionally biased toward acidic residues. One can recognise a PX domain in the interval 266-376 (FQCTIDDPTK…HFLTCPSSTD (111 aa)). Residues Arg-302, Lys-304, and Arg-342 each coordinate a 1,2-diacyl-sn-glycero-3-phospho-(1D-myo-inositol-4,5-bisphosphate). Residues 411 to 614 (LQEVESKIDG…EEALHKYDSV (204 aa)) enclose the BAR domain.

This sequence belongs to the sorting nexin family. As to quaternary structure, heterodimer with SNX9. Interacts with ITCH. Interacts with dynamin-2 (DNM2), SYNJ1 and WASL. Interacts with the AP-1 complex. Interacts with FCHSD1 (via the F-BAR domain).

The protein resides in the endomembrane system. It localises to the endosome membrane. The protein localises to the recycling endosome membrane. It is found in the cell membrane. Its subcellular location is the cytoplasmic vesicle membrane. Involved in endocytosis and intracellular vesicle trafficking, both during interphase and at the end of mitosis. Required for efficient progress through mitosis and cytokinesis. Required for normal formation of the cleavage furrow at the end of mitosis. Plays a role in endocytosis via clathrin-coated pits, but also clathrin-independent, actin-dependent fluid-phase endocytosis. Plays a role in macropinocytosis. Binds to membranes enriched in phosphatidylinositol 4,5-bisphosphate and promotes membrane tubulation. Stimulates the GTPase activity of DNM2. Promotes DNM2 location at the plasma membrane. Together with DNM2, involved in autophagosome assembly by regulating trafficking from recycling endosomes of phospholipid scramblase ATG9A. This is Sorting nexin-18 from Mus musculus (Mouse).